We begin with the raw amino-acid sequence, 422 residues long: Histidine--tRNA ligase (422 aa).

Belongs to the class-II aminoacyl-tRNA synthetase family. In terms of assembly, homodimer.

Its subcellular location is the cytoplasm. It carries out the reaction tRNA(His) + L-histidine + ATP = L-histidyl-tRNA(His) + AMP + diphosphate + H(+). The chain is Histidine--tRNA ligase from Vibrio vulnificus (strain CMCP6).